Consider the following 898-residue polypeptide: Transportin-1 (898 aa).

HEAT repeat units follow at residues 19–46 (GLQQ…QKLE), 51–89 (YPDF…AHFQ), 98–131 (FIKS…KGEL), 137–174 (LLPK…LDSD), 181–211 (NIMI…QFII), 224–251 (FIEN…VMLL), 263–290 (HNIV…FWLT), 306–397 (PKLI…LANV), 405–433 (HILP…GAIA), 445–472 (PELI…TLSR), 486–519 (LKPL…EEEA), 527–560 (LAYI…ADSV), 568–606 (EYIQ…TALQ), 614–665 (EPVY…GLGG), 676–707 (ILTL…KACF), 715–748 (ADFM…IQMG), 756–791 (PMVL…YVCP), 799–832 (QQFI…ISVN), 841–872 (IFFC…KNQV), and 875–895 (ENWR…LAAF). The Importin N-terminal domain occupies 41–109 (VQQKLEQLNQ…KSECLNNIGD (69 aa)). Residues 347-374 (FHRSRTVAQQHEEDGIEEEDDDDDEIDD) are disordered. Positions 360-374 (DGIEEEDDDDDEIDD) are enriched in acidic residues.

This sequence belongs to the importin beta family. Importin beta-2 subfamily. In terms of assembly, identified in a complex that contains TNPO1, RAN and RANBP1. Binds HNRPA1, HNRPA2, HNRNPDL, RPS7, RPL5 and RAN. Interacts with H2A, H2B, H3 and H4 histones. Interacts with isoform 1 and isoform 5 of ADAR/ADAR1 (via DRBM 3 domain). Interacts with SNAI1 (via zinc fingers); the interaction mediates SNAI1 nuclear import. Interacts with SNAI2 (via zinc fingers). Interacts with RPL23A (via BIB domain) and SRP19; this interaction is involved in RPL23A and SRP19 import into the nucleus. Interacts (via HEAT repeats 8-12) with BAP1 (via non-classical PY-NLS); this interaction is direct, is involved in BAP1 nuclear import and disrupts BAP1 homodimerization.

The protein resides in the cytoplasm. The protein localises to the nucleus. Functionally, functions in nuclear protein import as nuclear transport receptor. Serves as receptor for nuclear localization signals (NLS) in cargo substrates. May mediate docking of the importin/substrate complex to the nuclear pore complex (NPC) through binding to nucleoporin and the complex is subsequently translocated through the pore by an energy requiring, Ran-dependent mechanism. At the nucleoplasmic side of the NPC, Ran binds to the importin, the importin/substrate complex dissociates and importin is re-exported from the nucleus to the cytoplasm where GTP hydrolysis releases Ran. The directionality of nuclear import is thought to be conferred by an asymmetric distribution of the GTP- and GDP-bound forms of Ran between the cytoplasm and nucleus. Involved in nuclear import of M9-containing proteins. In vitro, binds directly to the M9 region of the heterogeneous nuclear ribonucleoproteins (hnRNP), A1 and A2 and mediates their nuclear import. Involved in hnRNP A1/A2 nuclear export. Mediates the nuclear import of ribosomal proteins RPL23A, RPS7 and RPL5. In vitro, mediates nuclear import of SRP19. Mediates the import of histones H2A, H2B, H3 and H4. Mediates nuclear import of ADAR/ADAR1 in a RanGTP-dependent manner. Main mediator of PR-DUB complex component BAP1 nuclear import; acts redundantly with the karyopherins KPNA1 and KPNA2. This is Transportin-1 (Tnpo1) from Mus musculus (Mouse).